The chain runs to 1289 residues: Outer capsid protein lambda-2 (1289 aa).

Residue 893–900 (GAAAAGKS) participates in ATP binding.

It belongs to the orthoreovirus lambda-2 protein family. In terms of assembly, interacts with protein mu-NS; in viral inclusions.

It is found in the virion. It catalyses the reaction a 5'-end diphospho-ribonucleoside in mRNA + GTP + H(+) = a 5'-end (5'-triphosphoguanosine)-ribonucleoside in mRNA + diphosphate. It carries out the reaction a 5'-end (5'-triphosphoguanosine)-ribonucleoside in mRNA + S-adenosyl-L-methionine = a 5'-end (N(7)-methyl 5'-triphosphoguanosine)-ribonucleoside in mRNA + S-adenosyl-L-homocysteine. Outer capsid protein involved in mRNA capping. Catalyzes the last 3 enzymatic activities for formation of the 5' cap structure on the viral plus-strand transcripts, namely the RNA guanylyltransferase, RNA-7N- and RNA-2'O-methyltransferase activities. This Reovirus type 1 (strain Lang) (T1L) protein is Outer capsid protein lambda-2 (L2).